The following is a 215-amino-acid chain: Urease accessory protein UreG (215 aa).

GTP is bound at residue 11 to 18 (GPVGAGKS).

Belongs to the SIMIBI class G3E GTPase family. UreG subfamily. As to quaternary structure, homodimer. UreD, UreF and UreG form a complex that acts as a GTP-hydrolysis-dependent molecular chaperone, activating the urease apoprotein by helping to assemble the nickel containing metallocenter of UreC. The UreE protein probably delivers the nickel.

It localises to the cytoplasm. Its function is as follows. Facilitates the functional incorporation of the urease nickel metallocenter. This process requires GTP hydrolysis, probably effectuated by UreG. The polypeptide is Urease accessory protein UreG (Cenarchaeum symbiosum (strain A)).